We begin with the raw amino-acid sequence, 356 residues long: Methylthioribose-1-phosphate isomerase (356 aa).

Residue D234 is the Proton donor of the active site.

Belongs to the eIF-2B alpha/beta/delta subunits family. MtnA subfamily.

It localises to the cytoplasm. Its subcellular location is the nucleus. It carries out the reaction 5-(methylsulfanyl)-alpha-D-ribose 1-phosphate = 5-(methylsulfanyl)-D-ribulose 1-phosphate. It participates in amino-acid biosynthesis; L-methionine biosynthesis via salvage pathway; L-methionine from S-methyl-5-thio-alpha-D-ribose 1-phosphate: step 1/6. In terms of biological role, catalyzes the interconversion of methylthioribose-1-phosphate (MTR-1-P) into methylthioribulose-1-phosphate (MTRu-1-P). The protein is Methylthioribose-1-phosphate isomerase (mri1) of Schizosaccharomyces japonicus (strain yFS275 / FY16936) (Fission yeast).